A 431-amino-acid chain; its full sequence is Phosphate regulon sensor protein PhoR (431 aa).

At 1 to 9 (MLERLSWKR) the chain is on the cytoplasmic side. A helical membrane pass occupies residues 10 to 28 (LVLELLLCCLPAFILGAFF). Over 29-32 (GYLP) the chain is Periplasmic. The chain crosses the membrane as a helical span at residues 33-51 (WFLLASVTGLLIWHFWNLL). The Cytoplasmic portion of the chain corresponds to 52-431 (RLSWWLWVDR…PERLIAKNSD (380 aa)). Residues 96–172 (LIKRFRSGAE…RPLNLVLNTG (77 aa)) form the PAS domain. Residues 210-425 (NVSHELRTPL…RFSFVIPERL (216 aa)) form the Histidine kinase domain. At His213 the chain carries Phosphohistidine; by autocatalysis.

It localises to the cell inner membrane. It catalyses the reaction ATP + protein L-histidine = ADP + protein N-phospho-L-histidine.. In terms of biological role, member of the two-component regulatory system PhoR/PhoB involved in the phosphate regulon genes expression. PhoR may function as a membrane-associated protein kinase that phosphorylates PhoB in response to environmental signals. The protein is Phosphate regulon sensor protein PhoR (phoR) of Escherichia coli (strain K12).